A 134-amino-acid chain; its full sequence is Thrombin inhibitor savignin (134 aa).

The N-terminal stretch at 1–16 (MLFYVVITLVAGTVSG) is a signal peptide. One can recognise a BPTI/Kunitz inhibitor 1 domain in the interval 17–69 (LNVRCNNPHTANCENGAKLESYFREGETCVGSPACPGEGYATKEDCQKACFPG). Disulfide bonds link cysteine 21–cysteine 66, cysteine 29–cysteine 51, cysteine 45–cysteine 62, cysteine 81–cysteine 129, cysteine 89–cysteine 112, and cysteine 105–cysteine 125. A linker region spans residues 70–82 (GGDHSTNVDSSCF). Residues 83–129 (GQPPTSCETGAEVTYYDSGSRTCKVLQHGCPSSENAFDSEIECQVAC) enclose the BPTI/Kunitz inhibitor domain.

Expressed in salivary glands.

The protein localises to the cytoplasmic vesicle. The protein resides in the secretory vesicle. It is found in the secreted. Its function is as follows. Tick salivary thrombin inhibitor that plays an important part in the anti-hemostatic strategy of ticks. Inhibits thrombin-induced platelet aggregation, but has no effect on ADP- or collagen-induced aggregation. Is a competitive, slow-, tight-binding inhibitor of thrombin (Ki=4.89 pM). It requires thrombin fibrinogen-binding exosite for optimal inhibition, as its affinity for thrombin lacking the exosite is much lower (Ki=22.3 nM). Its N-terminal amino acid residues may bind inside the active site cleft of thrombin, while its C-terminal domain may interact with the basic fibrinogen recognition exosite of thrombin. It does not inhibit plasmin, factor Xa (F10), and trypsin. In Ornithodoros kalahariensis (Tick), this protein is Thrombin inhibitor savignin.